The following is a 146-amino-acid chain: Late protein H7 (146 aa).

A helical transmembrane segment spans residues 10–32 (LAMTAFFGELNTLDIMALIMSIF).

The protein belongs to the chordopoxvirinae H7 family.

It is found in the membrane. In terms of biological role, contributes to the formation of crescents and immature virions (IV). In Vaccinia virus (strain Tian Tan) (VACV), this protein is Late protein H7.